A 606-amino-acid chain; its full sequence is Putative amino acid transporter AAT1 (606 aa).

The segment at 1–156 is disordered; sequence MNKKYGTSSN…DEEGTNKPKR (156 aa). Composition is skewed to basic and acidic residues over residues 12–25 and 72–89; these read HDNKKDKKNNADKN and SDKKNEKSDKNEKNESSK. Acidic residues predominate over residues 140 to 149; sequence SDGDYTNDEE. 11 consecutive transmembrane segments (helical) span residues 175–194, 200–225, 246–271, 283–301, 313–332, 352–372, 393–412, 428–449, 522–539, 545–567, and 579–605; these read TVLFICTAIGVGFLSIPYVF, ILSIILIILNAFESYVTTNILCTSSL, TIIDFGLSFGFVSSYILILILISNFL, LFTNNVFLVILICLLILPI, FLIFSLFSLSITVLTIGLQT, HFFKCFNILLFSFSQQPNACF, VILQVIFYTLFGILGYFSFL, VSILLCKFLLSLTFFFSVPLNF, MWISVIVTIFCALIACKV, VIGIGGGITSTLISCLLPNLIYY, and RYSTLFMLCFFSFMGFLSVVVTTLNLI.

The protein belongs to the amino acid/polyamine transporter 2 family.

Its subcellular location is the vacuole membrane. Putative amino acid transporter. Probably transports tryptophan. Involved in maintaining the osmotic homeostasis of the digestive vacuole. Important for the timely development and growth of the asexual-stage parasites and male gametocyte maturation. The protein is Putative amino acid transporter AAT1 of Plasmodium falciparum (isolate 3D7).